The chain runs to 262 residues: Small ribosomal subunit protein eS4 (262 aa).

The 63-residue stretch at 42 to 104 folds into the S4 RNA-binding domain; the sequence is LPLLIFLRNR…TGEFFRLIYD (63 aa).

Belongs to the eukaryotic ribosomal protein eS4 family.

The sequence is that of Small ribosomal subunit protein eS4 (RpS4) from Lysiphlebus testaceipes (Greenbugs aphid parastoid).